The sequence spans 98 residues: Large ribosomal subunit protein eL21 (98 aa).

The span at 1-17 shows a compositional bias: basic residues; the sequence is MQRSRGFRSKSRRKMTK. A disordered region spans residues 1-28; that stretch reads MQRSRGFRSKSRRKMTKVVREGRSNPIT.

Belongs to the eukaryotic ribosomal protein eL21 family.

This Methanobrevibacter smithii (strain ATCC 35061 / DSM 861 / OCM 144 / PS) protein is Large ribosomal subunit protein eL21.